Reading from the N-terminus, the 247-residue chain is Bidirectional sugar transporter SWEET1 (247 aa).

Residues 1-6 are Extracellular-facing; that stretch reads MNIAHT. The helical transmembrane segment at 7–27 threads the bilayer; the sequence is IFGVFGNATALFLFLAPSITF. The 88-residue stretch at 7–94 folds into the MtN3/slv 1 domain; it reads IFGVFGNATA…LIFLFYAPKK (88 aa). The Cytoplasmic portion of the chain corresponds to 28–41; that stretch reads KRIIKNKSTEQFSG. A helical transmembrane segment spans residues 42–62; it reads IPYPMTLLNCLLSAWYGLPFV. Over 63–71 the chain is Extracellular; sequence SKDNTLVST. Residues 72–92 traverse the membrane as a helical segment; that stretch reads INGTGAVIETVYVLIFLFYAP. The Cytoplasmic segment spans residues 93 to 98; sequence KKEKIK. Residues 99–119 form a helical membrane-spanning segment; it reads IFGIFSCVLAVFATVALVSLF. Residues 120-127 lie on the Extracellular side of the membrane; that stretch reads ALQGNGRK. The helical transmembrane segment at 128–148 threads the bilayer; it reads LFCGLAATVFSIIMYASPLSI. One can recognise a MtN3/slv 2 domain in the interval 130–213; the sequence is CGLAATVFSI…ILYFIYCGNK (84 aa). Over 149–162 the chain is Cytoplasmic; the sequence is MRLVVKTKSVEFMP. The helical transmembrane segment at 163-183 threads the bilayer; it reads FFLSLFVFLCGTSWFVYGLIG. Residues 184–187 are Extracellular-facing; sequence RDPF. A helical membrane pass occupies residues 188 to 208; sequence VAIPNGFGCALGTLQLILYFI. The Cytoplasmic segment spans residues 209-247; sequence YCGNKGEKSADAQKDEKSVEMKDDEKKQNVVNGKQDLQV. Residues 221–236 show a composition bias toward basic and acidic residues; the sequence is QKDEKSVEMKDDEKKQ. The tract at residues 221–247 is disordered; sequence QKDEKSVEMKDDEKKQNVVNGKQDLQV. The span at 237–247 shows a compositional bias: polar residues; that stretch reads NVVNGKQDLQV.

Belongs to the SWEET sugar transporter family. Forms homooligomers and heterooligomers with SWEET9, SWEET11, SWEET13, SWEET15, SWEET16 and SWEET17. In terms of tissue distribution, mainly expressed in flowers.

It localises to the cell membrane. It is found in the endoplasmic reticulum membrane. Mediates both low-affinity uptake and efflux of sugar across the plasma membrane. Can transport glucose, and, to a lower extent, mannose, fructose and galactose. This Arabidopsis thaliana (Mouse-ear cress) protein is Bidirectional sugar transporter SWEET1.